The chain runs to 156 residues: Small ribosomal subunit protein uS7 (156 aa).

Belongs to the universal ribosomal protein uS7 family. As to quaternary structure, part of the 30S ribosomal subunit. Contacts proteins S9 and S11.

Its function is as follows. One of the primary rRNA binding proteins, it binds directly to 16S rRNA where it nucleates assembly of the head domain of the 30S subunit. Is located at the subunit interface close to the decoding center, probably blocks exit of the E-site tRNA. The chain is Small ribosomal subunit protein uS7 from Clostridium beijerinckii (strain ATCC 51743 / NCIMB 8052) (Clostridium acetobutylicum).